Consider the following 385-residue polypeptide: MKNITILGATGSIGTQTLDVIRKEKEELKLVAISANKSYKKVIEIIKEFKPKYAVLMEENAFKIVEDFCVNSKIDTKVLKGMEGMIYISTLEEINTVVTSVVGMIGLVPTIKAIESGKDIALANKETLVVAGELVISKAKEHNVNILPVDSEHGAIFQCLRGNKKEEVKNIIVTASGGPFRGRKKEELIDIKPEHALKHPKWNMGRKISIDSATLMNKGLEVIEAHFLFGVDYENIKVVVHPQSIVHSMVEYKDGSVIAQMATPDMKLPIQYALNYPNRKESQIEPLDFYKISNLTFEKPDMDTFLPLKLAYEAGKKGGVMPAILNGANEVAVDLFLKGKIEFLQIGDLLQECMNKFYKSMEATLENVISVDKEVREYLGKKYDI.

6 residues coordinate NADPH: threonine 10, glycine 11, serine 12, isoleucine 13, lysine 37, and asparagine 124. A 1-deoxy-D-xylulose 5-phosphate-binding site is contributed by lysine 125. Glutamate 126 serves as a coordination point for NADPH. Aspartate 150 contributes to the Mn(2+) binding site. 1-deoxy-D-xylulose 5-phosphate contacts are provided by serine 151, glutamate 152, serine 176, and histidine 199. Glutamate 152 lines the Mn(2+) pocket. Glycine 205 contributes to the NADPH binding site. Positions 212, 217, 218, and 221 each coordinate 1-deoxy-D-xylulose 5-phosphate. Glutamate 221 contributes to the Mn(2+) binding site.

This sequence belongs to the DXR family. Mg(2+) serves as cofactor. The cofactor is Mn(2+).

The enzyme catalyses 2-C-methyl-D-erythritol 4-phosphate + NADP(+) = 1-deoxy-D-xylulose 5-phosphate + NADPH + H(+). It functions in the pathway isoprenoid biosynthesis; isopentenyl diphosphate biosynthesis via DXP pathway; isopentenyl diphosphate from 1-deoxy-D-xylulose 5-phosphate: step 1/6. Its function is as follows. Catalyzes the NADPH-dependent rearrangement and reduction of 1-deoxy-D-xylulose-5-phosphate (DXP) to 2-C-methyl-D-erythritol 4-phosphate (MEP). This Clostridium botulinum (strain 657 / Type Ba4) protein is 1-deoxy-D-xylulose 5-phosphate reductoisomerase.